Reading from the N-terminus, the 53-residue chain is uncharacterized protein (53 aa).

Residues 13–35 (FLLHSFTFPIAHCPSFSWASFFF) traverse the membrane as a helical segment.

It localises to the membrane. This is an uncharacterized protein from Saccharomyces cerevisiae (strain ATCC 204508 / S288c) (Baker's yeast).